The chain runs to 426 residues: Serine--tRNA ligase (426 aa).

229 to 231 (TAE) contacts L-serine. 260–262 (RSE) is a binding site for ATP. Residue Glu283 coordinates L-serine. An ATP-binding site is contributed by 347–350 (EIAS). Ser383 serves as a coordination point for L-serine.

The protein belongs to the class-II aminoacyl-tRNA synthetase family. Type-1 seryl-tRNA synthetase subfamily. As to quaternary structure, homodimer. The tRNA molecule binds across the dimer.

It localises to the cytoplasm. It catalyses the reaction tRNA(Ser) + L-serine + ATP = L-seryl-tRNA(Ser) + AMP + diphosphate + H(+). It carries out the reaction tRNA(Sec) + L-serine + ATP = L-seryl-tRNA(Sec) + AMP + diphosphate + H(+). Its pathway is aminoacyl-tRNA biosynthesis; selenocysteinyl-tRNA(Sec) biosynthesis; L-seryl-tRNA(Sec) from L-serine and tRNA(Sec): step 1/1. In terms of biological role, catalyzes the attachment of serine to tRNA(Ser). Is also able to aminoacylate tRNA(Sec) with serine, to form the misacylated tRNA L-seryl-tRNA(Sec), which will be further converted into selenocysteinyl-tRNA(Sec). In Rickettsia bellii (strain RML369-C), this protein is Serine--tRNA ligase.